Here is a 404-residue protein sequence, read N- to C-terminus: Phosphoglycerate kinase (404 aa).

Substrate-binding positions include 26-28 (DFN), Arg-41, 64-67 (HLGR), Arg-124, and Arg-161. ATP-binding positions include Lys-212, Gly-301, Glu-332, and 359–362 (GGDS).

The protein belongs to the phosphoglycerate kinase family. Monomer.

It localises to the cytoplasm. The enzyme catalyses (2R)-3-phosphoglycerate + ATP = (2R)-3-phospho-glyceroyl phosphate + ADP. It functions in the pathway carbohydrate degradation; glycolysis; pyruvate from D-glyceraldehyde 3-phosphate: step 2/5. The chain is Phosphoglycerate kinase from Mesomycoplasma hyopneumoniae (strain 232) (Mycoplasma hyopneumoniae).